We begin with the raw amino-acid sequence, 272 residues long: uncharacterized protein (272 aa).

2 helical membrane-spanning segments follow: residues 9–29 (GGDI…ASEH) and 252–272 (SHIS…ISFI).

It is found in the membrane. This is an uncharacterized protein from Caenorhabditis elegans.